A 258-amino-acid chain; its full sequence is Imidazole glycerol phosphate synthase subunit HisF (258 aa).

Active-site residues include D11 and D130.

The protein belongs to the HisA/HisF family. As to quaternary structure, heterodimer of HisH and HisF.

The protein resides in the cytoplasm. It catalyses the reaction 5-[(5-phospho-1-deoxy-D-ribulos-1-ylimino)methylamino]-1-(5-phospho-beta-D-ribosyl)imidazole-4-carboxamide + L-glutamine = D-erythro-1-(imidazol-4-yl)glycerol 3-phosphate + 5-amino-1-(5-phospho-beta-D-ribosyl)imidazole-4-carboxamide + L-glutamate + H(+). Its pathway is amino-acid biosynthesis; L-histidine biosynthesis; L-histidine from 5-phospho-alpha-D-ribose 1-diphosphate: step 5/9. In terms of biological role, IGPS catalyzes the conversion of PRFAR and glutamine to IGP, AICAR and glutamate. The HisF subunit catalyzes the cyclization activity that produces IGP and AICAR from PRFAR using the ammonia provided by the HisH subunit. The protein is Imidazole glycerol phosphate synthase subunit HisF of Cronobacter sakazakii (strain ATCC BAA-894) (Enterobacter sakazakii).